A 578-amino-acid chain; its full sequence is Alpha-(1,6)-fucosyltransferase (578 aa).

Residues 1–9 are Cytoplasmic-facing; that stretch reads MRPWTGSWR. A helical; Signal-anchor for type II membrane protein membrane pass occupies residues 10–30; sequence WIMLILFAWGTLLFYIGGHLV. Residues 31 to 578 lie on the Lumenal side of the membrane; that stretch reads RDNENPDHSS…KYPTYQEAEK (548 aa). Intrachain disulfides connect C207-C269, C215-C233, and C221-C225. One can recognise a GT23 domain in the interval 209–496; it reads KAKKLVCNIN…PDASAHFHSL (288 aa). The SH3-binding motif lies at 302-308; the sequence is PRPPYLP. The interval 368–369 is important for donor substrate binding; it reads RR. Cysteines 468 and 475 form a disulfide. The SH3 domain maps to 505–566; the sequence is QNAHNQLAIY…PSYKVKEKIE (62 aa).

It belongs to the glycosyltransferase 23 family.

It is found in the golgi apparatus. Its subcellular location is the golgi stack membrane. It carries out the reaction N(4)-{beta-D-GlcNAc-(1-&gt;2)-alpha-D-Man-(1-&gt;3)-[beta-D-GlcNAc-(1-&gt;2)-alpha-D-Man-(1-&gt;6)]-beta-D-Man-(1-&gt;4)-beta-D-GlcNAc-(1-&gt;4)-beta-D-GlcNAc}-L-asparaginyl-[protein] + GDP-beta-L-fucose = an N(4)-{beta-D-GlcNAc-(1-&gt;2)-alpha-D-Man-(1-&gt;3)-[beta-D-GlcNAc-(1-&gt;2)-alpha-D-Man-(1-&gt;6)]-beta-D-Man-(1-&gt;4)-beta-D-GlcNAc-(1-&gt;4)-[alpha-L-Fuc-(1-&gt;6)]-beta-D-GlcNAc}-L-asparaginyl-[protein] + GDP + H(+). Its pathway is protein modification; protein glycosylation. Its function is as follows. Catalyzes the addition of fucose in alpha 1-6 linkage to the first GlcNAc residue, next to the peptide chains in N-glycans. This is Alpha-(1,6)-fucosyltransferase (fut8) from Xenopus tropicalis (Western clawed frog).